Reading from the N-terminus, the 307-residue chain is GMP synthase [glutamine-hydrolyzing] subunit B (307 aa).

Residues 1-184 (MWENFIEEKV…LGLPEKIYNR (184 aa)) enclose the GMPS ATP-PPase domain. Residue 27 to 33 (SGGVDSS) coordinates ATP.

Heterodimer composed of a glutamine amidotransferase subunit (A) and a GMP-binding subunit (B).

The catalysed reaction is XMP + L-glutamine + ATP + H2O = GMP + L-glutamate + AMP + diphosphate + 2 H(+). Its pathway is purine metabolism; GMP biosynthesis; GMP from XMP (L-Gln route): step 1/1. Its function is as follows. Catalyzes the synthesis of GMP from XMP. This chain is GMP synthase [glutamine-hydrolyzing] subunit B, found in Thermococcus kodakarensis (strain ATCC BAA-918 / JCM 12380 / KOD1) (Pyrococcus kodakaraensis (strain KOD1)).